Here is a 390-residue protein sequence, read N- to C-terminus: Glutamate 5-kinase (390 aa).

Lys-29 is a binding site for ATP. 3 residues coordinate substrate: Ser-69, Asp-156, and Asn-168. 188 to 189 (TD) provides a ligand contact to ATP. Positions 295–374 (SGSLIVDAGA…EQFDRILGNN (80 aa)) constitute a PUA domain.

Belongs to the glutamate 5-kinase family.

It is found in the cytoplasm. It carries out the reaction L-glutamate + ATP = L-glutamyl 5-phosphate + ADP. Its pathway is amino-acid biosynthesis; L-proline biosynthesis; L-glutamate 5-semialdehyde from L-glutamate: step 1/2. Its function is as follows. Catalyzes the transfer of a phosphate group to glutamate to form L-glutamate 5-phosphate. The sequence is that of Glutamate 5-kinase from Psychrobacter arcticus (strain DSM 17307 / VKM B-2377 / 273-4).